The sequence spans 157 residues: Thiocyanate hydrolase subunit beta (157 aa).

As to quaternary structure, heterododecamer consisting of 4 alpha, 4 beta, and 4 gamma subunits.

It carries out the reaction thiocyanate + H2O + 2 H(+) = carbonyl sulfide + NH4(+). It functions in the pathway organosulfur degradation; thiocyanate degradation. Functionally, involved in the degradation of thiocyanate. This chain is Thiocyanate hydrolase subunit beta (scnB), found in Thiobacillus thioparus.